Here is a 115-residue protein sequence, read N- to C-terminus: DNA-directed RNA polymerase subunit Rpo4 (115 aa).

It belongs to the eukaryotic RPB4 RNA polymerase subunit family. In terms of assembly, part of the RNA polymerase complex. Forms a stalk with Rpo7 that extends from the main structure.

Its subcellular location is the cytoplasm. The catalysed reaction is RNA(n) + a ribonucleoside 5'-triphosphate = RNA(n+1) + diphosphate. In terms of biological role, DNA-dependent RNA polymerase (RNAP) catalyzes the transcription of DNA into RNA using the four ribonucleoside triphosphates as substrates. This subunit is less well bound than the others. The sequence is that of DNA-directed RNA polymerase subunit Rpo4 from Methanocaldococcus jannaschii (strain ATCC 43067 / DSM 2661 / JAL-1 / JCM 10045 / NBRC 100440) (Methanococcus jannaschii).